A 640-amino-acid polypeptide reads, in one-letter code: Pro-neuregulin-1, membrane-bound isoform (640 aa).

Residues 1 to 19 (MSERKEGRGKGKGKKKERG) constitute a propeptide that is removed on maturation. Positions 1–53 (MSERKEGRGKGKGKKKERGSGKKPESAAGSQSPALPPRLKEMKSQESAAGSKL) are disordered. At 20-242 (SGKKPESAAG…EKAEELYQKR (223 aa)) the chain is on the extracellular side. The region spanning 37–128 (PRLKEMKSQE…GNDSASANIT (92 aa)) is the Ig-like C2-type domain. The cysteines at positions 57 and 112 are disulfide-linked. 3 N-linked (GlcNAc...) asparagine glycosylation sites follow: N120, N126, and N164. Positions 178–222 (HLVKCAEKEKTFCVNGGECFMVKDLSNPSRYLCKCQPGFTGARCT) constitute an EGF-like domain. 3 disulfide bridges follow: C182/C196, C190/C210, and C212/C221. A helical membrane pass occupies residues 243-265 (VLTITGICIALLVVGIMCVVAYC). At 266 to 640 (KTKKQRKKLH…VIANQDPIAV (375 aa)) the chain is on the cytoplasmic side. Residues 334 to 350 (TSHYTSTAHHSTTVTQT) show a composition bias toward low complexity. Disordered stretches follow at residues 334 to 360 (TSHY…NGHT), 375 to 399 (SVEN…GGPR), 433 to 461 (RMSP…SMTV), and 524 to 588 (EYET…DTPF). Over residues 351–360 (PSHSWSNGHT) the composition is skewed to polar residues. The segment covering 387 to 397 (GPRGRLNGTGG) has biased composition (gly residues). A compositionally biased stretch (basic residues) spans 542–552 (ANSRRAKRTKP). The segment covering 563 to 574 (DSNTSSQSSNSE) has biased composition (low complexity).

This sequence belongs to the neuregulin family. In terms of assembly, the cytoplasmic domain interacts with the LIM domain region of LIMK1. Forms a ternary complex with ERBB3 and ITGAV:ITGB3 or ITGA6:ITGB4. Interacts with NRDC and BACE1. Post-translationally, proteolytic cleavage close to the plasma membrane on the external face leads to the release of the soluble growth factor form. N- and O-glycosylated. Extensive glycosylation precedes the proteolytic cleavage. In terms of tissue distribution, type I isoforms are the predominant forms expressed in the endocardium. Isoform alpha is expressed in breast, ovary, testis, prostate, heart, skeletal muscle, lung, placenta liver, kidney, salivary gland, small intestine and brain, but not in uterus, stomach, pancreas, and spleen. Isoform 3 is the predominant form in mesenchymal cells and in non-neuronal organs, whereas isoform 6 is the major neuronal form. Isoform 8 is expressed in spinal cord and brain. Isoform 9 is the major form in skeletal muscle cells; in the nervous system it is expressed in spinal cord and brain. Also detected in adult heart, placenta, lung, liver, kidney, and pancreas. Isoform 10 is expressed in nervous system: spinal cord motor neurons, dorsal root ganglion neurons, and brain. Predominant isoform expressed in sensory and motor neurons. Not detected in adult heart, placenta, lung, liver, skeletal muscle, kidney, and pancreas. Not expressed in fetal lung, liver and kidney. Type IV isoforms are brain-specific.

It localises to the cell membrane. It is found in the secreted. The protein resides in the nucleus. Its subcellular location is the membrane. In terms of biological role, direct ligand for ERBB3 and ERBB4 tyrosine kinase receptors. Concomitantly recruits ERBB1 and ERBB2 coreceptors, resulting in ligand-stimulated tyrosine phosphorylation and activation of the ERBB receptors. The multiple isoforms perform diverse functions such as inducing growth and differentiation of epithelial, glial, neuronal, and skeletal muscle cells; inducing expression of acetylcholine receptor in synaptic vesicles during the formation of the neuromuscular junction; stimulating lobuloalveolar budding and milk production in the mammary gland and inducing differentiation of mammary tumor cells; stimulating Schwann cell proliferation; implication in the development of the myocardium such as trabeculation of the developing heart. Isoform 10 may play a role in motor and sensory neuron development. Binds to ERBB4. Binds to ERBB3. Acts as a ligand for integrins and binds (via EGF domain) to integrins ITGAV:ITGB3 or ITGA6:ITGB4. Its binding to integrins and subsequent ternary complex formation with integrins and ERRB3 are essential for NRG1-ERBB signaling. Induces the phosphorylation and activation of MAPK3/ERK1, MAPK1/ERK2 and AKT1. Ligand-dependent ERBB4 endocytosis is essential for the NRG1-mediated activation of these kinases in neurons. This is Pro-neuregulin-1, membrane-bound isoform (NRG1) from Homo sapiens (Human).